The sequence spans 251 residues: Triosephosphate isomerase (251 aa).

Residue 9–11 (NWK) participates in substrate binding. Catalysis depends on His-95, which acts as the Electrophile. The Proton acceptor role is filled by Glu-167. Residues Gly-173, Ser-213, and 234 to 235 (GG) each bind substrate.

The protein belongs to the triosephosphate isomerase family. As to quaternary structure, homodimer.

It localises to the cytoplasm. It carries out the reaction D-glyceraldehyde 3-phosphate = dihydroxyacetone phosphate. It functions in the pathway carbohydrate biosynthesis; gluconeogenesis. It participates in carbohydrate degradation; glycolysis; D-glyceraldehyde 3-phosphate from glycerone phosphate: step 1/1. Functionally, involved in the gluconeogenesis. Catalyzes stereospecifically the conversion of dihydroxyacetone phosphate (DHAP) to D-glyceraldehyde-3-phosphate (G3P). The sequence is that of Triosephosphate isomerase from Fusobacterium nucleatum subsp. nucleatum (strain ATCC 25586 / DSM 15643 / BCRC 10681 / CIP 101130 / JCM 8532 / KCTC 2640 / LMG 13131 / VPI 4355).